Consider the following 87-residue polypeptide: Small ribosomal subunit protein bS18B (87 aa).

This sequence belongs to the bacterial ribosomal protein bS18 family. In terms of assembly, part of the 30S ribosomal subunit. Forms a tight heterodimer with protein bS6.

Binds as a heterodimer with protein bS6 to the central domain of the 16S rRNA, where it helps stabilize the platform of the 30S subunit. In Mycolicibacterium vanbaalenii (strain DSM 7251 / JCM 13017 / BCRC 16820 / KCTC 9966 / NRRL B-24157 / PYR-1) (Mycobacterium vanbaalenii), this protein is Small ribosomal subunit protein bS18B.